The primary structure comprises 558 residues: GPI mannosyltransferase 3 (558 aa).

4 consecutive transmembrane segments (helical) span residues 53 to 73 (GLRSVFFPAVVALPFYLLKLL), 81 to 101 (VWFAPRVLQALVLTLIDVSVF), 164 to 184 (AYCGVRLYGNVIEALLVLLTL), and 190 to 210 (VPFLLLTGLASAIRVTSAVVL). Asparagine 220 carries an N-linked (GlcNAc...) asparagine glycan. Residues 234-254 (IVLTGLIVLVAVLGGVMVLDY) form a helical membrane-spanning segment. N-linked (GlcNAc...) asparagine glycosylation occurs at asparagine 275. Helical transmembrane passes span 292 to 312 (VLVGIVGPHVLFTIAAPLVLW), 323 to 343 (PVLGMLGIGAWTLGFYSLIDH), 348 to 368 (FVFVVIPLSLITAAFVLVRWS), and 372 to 392 (AVVVKMNRLFVLFNIVMIYLM).

It belongs to the glycosyltransferase 22 family. PIGB subfamily.

It localises to the endoplasmic reticulum membrane. It functions in the pathway glycolipid biosynthesis; glycosylphosphatidylinositol-anchor biosynthesis. Its function is as follows. Mannosyltransferase involved in glycosylphosphatidylinositol-anchor biosynthesis. Transfers the third alpha-1,2-mannose to Man2-GlcN-acyl-PI during GPI precursor assembly. In Trypanosoma brucei brucei (strain 927/4 GUTat10.1), this protein is GPI mannosyltransferase 3 (GPI10).